Here is a 242-residue protein sequence, read N- to C-terminus: Synaptonemal complex central element protein 1-like (242 aa).

The tract at residues 1-24 (MAGKLKPLNVEAPEATEEAEGQAK) is disordered. Residues 44–181 (LEPQIEDLIS…LREVERRLHS (138 aa)) are a coiled coil. The disordered stretch occupies residues 206–242 (VRSAPEVGAGEGEAGPELPRARDEEDPEPPVAAPDAL).

It belongs to the SYCE family.

Functionally, may be involved in meiosis. This is Synaptonemal complex central element protein 1-like (SYCE1L) from Homo sapiens (Human).